Consider the following 497-residue polypeptide: Probable cytosol aminopeptidase (497 aa).

Residues lysine 263 and aspartate 268 each coordinate Mn(2+). Lysine 275 is an active-site residue. 3 residues coordinate Mn(2+): aspartate 286, aspartate 345, and glutamate 347. Arginine 349 is an active-site residue.

Belongs to the peptidase M17 family. The cofactor is Mn(2+).

The protein resides in the cytoplasm. The catalysed reaction is Release of an N-terminal amino acid, Xaa-|-Yaa-, in which Xaa is preferably Leu, but may be other amino acids including Pro although not Arg or Lys, and Yaa may be Pro. Amino acid amides and methyl esters are also readily hydrolyzed, but rates on arylamides are exceedingly low.. It carries out the reaction Release of an N-terminal amino acid, preferentially leucine, but not glutamic or aspartic acids.. Functionally, presumably involved in the processing and regular turnover of intracellular proteins. Catalyzes the removal of unsubstituted N-terminal amino acids from various peptides. The protein is Probable cytosol aminopeptidase of Rhizobium meliloti (strain 1021) (Ensifer meliloti).